We begin with the raw amino-acid sequence, 156 residues long: Ribosomal RNA large subunit methyltransferase H (156 aa).

S-adenosyl-L-methionine-binding positions include leucine 73, glycine 104, and 123 to 128 (LGALTL).

This sequence belongs to the RNA methyltransferase RlmH family. In terms of assembly, homodimer.

The protein resides in the cytoplasm. The enzyme catalyses pseudouridine(1915) in 23S rRNA + S-adenosyl-L-methionine = N(3)-methylpseudouridine(1915) in 23S rRNA + S-adenosyl-L-homocysteine + H(+). Functionally, specifically methylates the pseudouridine at position 1915 (m3Psi1915) in 23S rRNA. The chain is Ribosomal RNA large subunit methyltransferase H from Dichelobacter nodosus (strain VCS1703A).